We begin with the raw amino-acid sequence, 377 residues long: DNA replication and repair protein RecF (377 aa).

30–37 (GLNGSGKT) lines the ATP pocket.

The protein belongs to the RecF family.

It is found in the cytoplasm. The RecF protein is involved in DNA metabolism; it is required for DNA replication and normal SOS inducibility. RecF binds preferentially to single-stranded, linear DNA. It also seems to bind ATP. This is DNA replication and repair protein RecF from Cytophaga hutchinsonii (strain ATCC 33406 / DSM 1761 / CIP 103989 / NBRC 15051 / NCIMB 9469 / D465).